The following is a 408-amino-acid chain: Glutamate N-acetyltransferase (408 aa).

Residues threonine 150, lysine 176, threonine 189, glutamate 271, asparagine 403, and threonine 408 each coordinate substrate. Threonine 189 acts as the Nucleophile in catalysis.

It belongs to the ArgJ family. As to quaternary structure, heterotetramer of two alpha and two beta chains.

Its subcellular location is the cytoplasm. The catalysed reaction is N(2)-acetyl-L-ornithine + L-glutamate = N-acetyl-L-glutamate + L-ornithine. Its pathway is amino-acid biosynthesis; L-arginine biosynthesis; L-ornithine and N-acetyl-L-glutamate from L-glutamate and N(2)-acetyl-L-ornithine (cyclic): step 1/1. Catalyzes the transfer of the acetyl group from N(2)-acetylornithine to glutamate, forming N-acetylglutamate and L-ornithine. The polypeptide is Glutamate N-acetyltransferase (Methanococcus vannielii (strain ATCC 35089 / DSM 1224 / JCM 13029 / OCM 148 / SB)).